A 345-amino-acid chain; its full sequence is tRNA N6-adenosine threonylcarbamoyltransferase (345 aa).

The Fe cation site is built by His-109 and His-113. Residues 136-140 (TVSGG), Asp-169, Gly-182, Asp-186, and Asn-284 each bind substrate. Residue Asp-312 coordinates Fe cation.

It belongs to the KAE1 / TsaD family. Fe(2+) serves as cofactor.

It localises to the cytoplasm. It catalyses the reaction L-threonylcarbamoyladenylate + adenosine(37) in tRNA = N(6)-L-threonylcarbamoyladenosine(37) in tRNA + AMP + H(+). Its function is as follows. Required for the formation of a threonylcarbamoyl group on adenosine at position 37 (t(6)A37) in tRNAs that read codons beginning with adenine. Is involved in the transfer of the threonylcarbamoyl moiety of threonylcarbamoyl-AMP (TC-AMP) to the N6 group of A37, together with TsaE and TsaB. TsaD likely plays a direct catalytic role in this reaction. In Chlorobium phaeovibrioides (strain DSM 265 / 1930) (Prosthecochloris vibrioformis (strain DSM 265)), this protein is tRNA N6-adenosine threonylcarbamoyltransferase.